The chain runs to 434 residues: uncharacterized protein (434 aa).

A run of 11 helical transmembrane segments spans residues 50–70 (GSIA…SFTL), 72–92 (TGLL…VLAI), 95–115 (LMAF…LLPV), 135–155 (SPVV…QFGW), 158–178 (SLIA…YFPH), 179–199 (LNPE…IAIT), 229–249 (LPYI…KIFA), 288–308 (GFVP…VAGF), 319–339 (PNPM…VLLL), 376–396 (IFAA…AIYF), and 412–432 (VVAV…GLFV).

The protein resides in the cell membrane. This is an uncharacterized protein from Escherichia coli (strain K12).